The primary structure comprises 401 residues: 1-deoxy-D-xylulose 5-phosphate reductoisomerase (401 aa).

Residues Thr-11, Gly-12, Ser-13, Ile-14, Arg-38, Asn-39, and Asn-125 each coordinate NADPH. Residue Lys-126 participates in 1-deoxy-D-xylulose 5-phosphate binding. Glu-127 is a binding site for NADPH. Asp-151 provides a ligand contact to Mn(2+). Residues Ser-152, Glu-153, Ser-179, and His-202 each contribute to the 1-deoxy-D-xylulose 5-phosphate site. Mn(2+) is bound at residue Glu-153. Gly-208 contributes to the NADPH binding site. Residues Ser-215, Asn-220, Lys-221, and Glu-224 each coordinate 1-deoxy-D-xylulose 5-phosphate. Residue Glu-224 coordinates Mn(2+).

This sequence belongs to the DXR family. The cofactor is Mg(2+). Mn(2+) is required as a cofactor.

It catalyses the reaction 2-C-methyl-D-erythritol 4-phosphate + NADP(+) = 1-deoxy-D-xylulose 5-phosphate + NADPH + H(+). It participates in isoprenoid biosynthesis; isopentenyl diphosphate biosynthesis via DXP pathway; isopentenyl diphosphate from 1-deoxy-D-xylulose 5-phosphate: step 1/6. Functionally, catalyzes the NADPH-dependent rearrangement and reduction of 1-deoxy-D-xylulose-5-phosphate (DXP) to 2-C-methyl-D-erythritol 4-phosphate (MEP). In Paraburkholderia xenovorans (strain LB400), this protein is 1-deoxy-D-xylulose 5-phosphate reductoisomerase.